A 465-amino-acid chain; its full sequence is Chromosomal replication initiator protein DnaA (465 aa).

The domain I, interacts with DnaA modulators stretch occupies residues 1–72 (MRTKQLWQVA…ETLSLLLGRP (72 aa)). The tract at residues 72-117 (PIAVHFTVHGQDDEEHPVQRRPQRRALASEEGSASKQLSLTPSPEH) is domain II. The disordered stretch occupies residues 80 to 118 (HGQDDEEHPVQRRPQRRALASEEGSASKQLSLTPSPEHG). Residues 103–113 (GSASKQLSLTP) show a composition bias toward polar residues. The segment at 118–334 (GLNPRYTFEK…GALNRIVALA (217 aa)) is domain III, AAA+ region. 4 residues coordinate ATP: Gly162, Gly164, Lys165, and Thr166. The segment at 335-465 (QLTHQPITLA…DAKAPLASRH (131 aa)) is domain IV, binds dsDNA.

This sequence belongs to the DnaA family. In terms of assembly, oligomerizes as a right-handed, spiral filament on DNA at oriC.

The protein localises to the cytoplasm. Its function is as follows. Plays an essential role in the initiation and regulation of chromosomal replication. ATP-DnaA binds to the origin of replication (oriC) to initiate formation of the DNA replication initiation complex once per cell cycle. Binds the DnaA box (a 9 base pair repeat at the origin) and separates the double-stranded (ds)DNA. Forms a right-handed helical filament on oriC DNA; dsDNA binds to the exterior of the filament while single-stranded (ss)DNA is stabiized in the filament's interior. The ATP-DnaA-oriC complex binds and stabilizes one strand of the AT-rich DNA unwinding element (DUE), permitting loading of DNA polymerase. After initiation quickly degrades to an ADP-DnaA complex that is not apt for DNA replication. Binds acidic phospholipids. The protein is Chromosomal replication initiator protein DnaA of Thermomicrobium roseum (strain ATCC 27502 / DSM 5159 / P-2).